Here is a 215-residue protein sequence, read N- to C-terminus: Endoplasmic reticulum vesicle protein 25 (215 aa).

An N-terminal signal peptide occupies residues 1–21; it reads MQSLITYIALVFSLFVSSAIG. Residues 22 to 184 are Lumenal-facing; that stretch reads LHLEVPALPN…TNESTNSRVK (163 aa). In terms of domain architecture, GOLD spans 34–125; that stretch reads PVCIRDFVQE…VRSVELDIES (92 aa). The helical transmembrane segment at 185-205 threads the bilayer; that stretch reads WFSIVVIASLVGFGVWQIQYL. Residues 206-215 are Cytoplasmic-facing; that stretch reads RHYFKVKHII.

This sequence belongs to the EMP24/GP25L family.

Its subcellular location is the endoplasmic reticulum membrane. The protein localises to the golgi apparatus membrane. Functionally, constituent of COPII-coated endoplasmic reticulum-derived transport vesicles. Required for efficient transport of a subset of secretory proteins to the Golgi. Facilitates retrograde transport from the Golgi to the endoplasmic reticulum. This is Endoplasmic reticulum vesicle protein 25 (ERV25) from Candida albicans (strain SC5314 / ATCC MYA-2876) (Yeast).